Here is a 183-residue protein sequence, read N- to C-terminus: Large ribosomal subunit protein uL18 (183 aa).

It belongs to the universal ribosomal protein uL18 family. In terms of assembly, part of the 50S ribosomal subunit. Contacts the 5S and 23S rRNAs.

Functionally, this is one of the proteins that bind and probably mediate the attachment of the 5S RNA into the large ribosomal subunit, where it forms part of the central protuberance. The protein is Large ribosomal subunit protein uL18 of Halobacterium salinarum (strain ATCC 29341 / DSM 671 / R1).